An 883-amino-acid polypeptide reads, in one-letter code: Translation initiation factor IF-2 (883 aa).

2 disordered regions span residues 1-96 (MVDT…RSGM) and 132-259 (QRRA…RGRL). Over residues 57 to 66 (PAEPAAAAPE) the composition is skewed to low complexity. Pro residues predominate over residues 72 to 87 (TPAPPAVSPRQQPRPS). The segment covering 132-188 (QRRAAQELVDKAEREAAEVRRKAEEERHRHEEETKRKAETEAKKRFGEAEPAKKPAD) has biased composition (basic and acidic residues). Positions 191 to 217 (PASTSTTTTAPRAPVTTTTRPPAVAAE) are enriched in low complexity. A tr-type G domain is found at 380-551 (PRSPVVTVMG…ALQAELLDLK (172 aa)). Residues 389–396 (GHVDHGKT) form a G1 region. 389–396 (GHVDHGKT) is a GTP binding site. A G2 region spans residues 414–418 (GITQH). A G3 region spans residues 437–440 (DTPG). Residues 437 to 441 (DTPGH) and 491 to 494 (NKID) contribute to the GTP site. Residues 491-494 (NKID) form a G4 region. A G5 region spans residues 527 to 529 (SAK).

Belongs to the TRAFAC class translation factor GTPase superfamily. Classic translation factor GTPase family. IF-2 subfamily.

It is found in the cytoplasm. Its function is as follows. One of the essential components for the initiation of protein synthesis. Protects formylmethionyl-tRNA from spontaneous hydrolysis and promotes its binding to the 30S ribosomal subunits. Also involved in the hydrolysis of GTP during the formation of the 70S ribosomal complex. The chain is Translation initiation factor IF-2 from Rhodopseudomonas palustris (strain BisB5).